The following is a 2451-amino-acid chain: Reducing polyketide synthase 8 (2451 aa).

One can recognise a Ketosynthase family 3 (KS3) domain in the interval asparagine 12–alanine 434. Active-site for beta-ketoacyl synthase activity residues include cysteine 174, histidine 313, and histidine 354. Residues valine 538–methionine 846 enclose the Malonyl-CoA:ACP transacylase (MAT) domain. The tract at residues histidine 940 to proline 1085 is N-terminal hotdog fold. The PKS/mFAS DH domain maps to histidine 940–serine 1254. Histidine 974 (proton acceptor; for dehydratase activity) is an active-site residue. Residues leucine 1100–serine 1254 are C-terminal hotdog fold. Catalysis depends on aspartate 1160, which acts as the Proton donor; for dehydratase activity. The tract at residues leucine 1294–glutamine 1590 is methyltransfrase (MT) domain. One can recognise a Ketoreductase (KR) domain in the interval threonine 2088–valine 2266. The Carrier domain occupies aspartate 2366 to alanine 2451. Serine 2404 carries the post-translational modification O-(pantetheine 4'-phosphoryl)serine.

Requires pantetheine 4'-phosphate as cofactor.

It participates in secondary metabolite biosynthesis. Reducing polyketide synthase; part of the gene cluster that mediates the biosynthesis of fusamarins, isocoumarin derivatives that show moderate cytotoxicity with IC(50) values between 1 and 50 uM. The polyketide synthase FMN1 probably synthesizes two different polyketides, a tetra- and a pentaketide, containinga varying number of double bonds depending on the selective actions of the trans-enoyl reductase FMN2. Chain fusion will presumably be mediated by the KS domain before finally offloading is catalyzed by the alpha/beta hydrolase fold enzyme FMN3. The protein is Reducing polyketide synthase 8 of Fusarium mangiferae (Mango malformation disease fungus).